The following is a 258-amino-acid chain: Small ribosomal subunit protein mS40 (258 aa).

Residues 1–35 (MAASVLNVLLRRLPYFSPFRGAYGVQVPLQTLCTK) constitute a mitochondrion transit peptide. Position 49 is a phosphoserine (Ser49). Residues 221–258 (QGHLREESGPPPESMPKVPLTAPNEATSTEQAGPQSAL) form a disordered region. Over residues 244–258 (NEATSTEQAGPQSAL) the composition is skewed to polar residues.

Belongs to the bacterial ribosomal protein bS18 family. Mitochondrion-specific ribosomal protein mS40 subfamily. In terms of assembly, component of the mitochondrial ribosome small subunit (28S) which comprises a 12S rRNA and about 30 distinct proteins.

It localises to the mitochondrion. The polypeptide is Small ribosomal subunit protein mS40 (Bos taurus (Bovine)).